The sequence spans 272 residues: Indole-3-glycerol phosphate synthase (272 aa).

It belongs to the TrpC family.

It catalyses the reaction 1-(2-carboxyphenylamino)-1-deoxy-D-ribulose 5-phosphate + H(+) = (1S,2R)-1-C-(indol-3-yl)glycerol 3-phosphate + CO2 + H2O. Its pathway is amino-acid biosynthesis; L-tryptophan biosynthesis; L-tryptophan from chorismate: step 4/5. The sequence is that of Indole-3-glycerol phosphate synthase from Mycobacterium tuberculosis (strain ATCC 25177 / H37Ra).